The chain runs to 105 residues: Probable tetrachloroethene reductive dehalogenase membrane anchor protein (105 aa).

A run of 3 helical transmembrane segments spans residues 3-23 (IYDVLIWMALGMIALLIQYGI), 35-55 (IPLQICGFLANFFFIFALAWG), and 66-86 (AIGMGFIFFGGTALIPAIITY).

This sequence belongs to the PceB family.

The protein localises to the cell membrane. Its function is as follows. May act as a membrane anchor for the tetrachloroethene reductive dehalogenase PceA. The chain is Probable tetrachloroethene reductive dehalogenase membrane anchor protein from Desulfitobacterium hafniense (Desulfitobacterium frappieri).